The sequence spans 479 residues: Aspartyl/glutamyl-tRNA(Asn/Gln) amidotransferase subunit B (479 aa).

This sequence belongs to the GatB/GatE family. GatB subfamily. In terms of assembly, heterotrimer of A, B and C subunits.

The catalysed reaction is L-glutamyl-tRNA(Gln) + L-glutamine + ATP + H2O = L-glutaminyl-tRNA(Gln) + L-glutamate + ADP + phosphate + H(+). The enzyme catalyses L-aspartyl-tRNA(Asn) + L-glutamine + ATP + H2O = L-asparaginyl-tRNA(Asn) + L-glutamate + ADP + phosphate + 2 H(+). Functionally, allows the formation of correctly charged Asn-tRNA(Asn) or Gln-tRNA(Gln) through the transamidation of misacylated Asp-tRNA(Asn) or Glu-tRNA(Gln) in organisms which lack either or both of asparaginyl-tRNA or glutaminyl-tRNA synthetases. The reaction takes place in the presence of glutamine and ATP through an activated phospho-Asp-tRNA(Asn) or phospho-Glu-tRNA(Gln). The polypeptide is Aspartyl/glutamyl-tRNA(Asn/Gln) amidotransferase subunit B (Streptococcus uberis (strain ATCC BAA-854 / 0140J)).